Consider the following 210-residue polypeptide: ATP-dependent dethiobiotin synthetase BioD (210 aa).

Asn-12 to His-17 contacts ATP. Thr-16 is a binding site for Mg(2+). Lys-37 is a catalytic residue. A substrate-binding site is contributed by Thr-41. Glu-114 serves as a coordination point for Mg(2+). Glu-114–Gly-117 serves as a coordination point for ATP.

This sequence belongs to the dethiobiotin synthetase family. Homodimer. Mg(2+) is required as a cofactor.

It localises to the cytoplasm. The catalysed reaction is (7R,8S)-7,8-diammoniononanoate + CO2 + ATP = (4R,5S)-dethiobiotin + ADP + phosphate + 3 H(+). Its pathway is cofactor biosynthesis; biotin biosynthesis; biotin from 7,8-diaminononanoate: step 1/2. Catalyzes a mechanistically unusual reaction, the ATP-dependent insertion of CO2 between the N7 and N8 nitrogen atoms of 7,8-diaminopelargonic acid (DAPA, also called 7,8-diammoniononanoate) to form a ureido ring. This Sulfurovum sp. (strain NBC37-1) protein is ATP-dependent dethiobiotin synthetase BioD.